We begin with the raw amino-acid sequence, 93 residues long: Acylphosphatase (93 aa).

Positions 7-93 constitute an Acylphosphatase-like domain; it reads RLTAWVHGRV…ADAIAGFTER (87 aa). Residues Arg-22 and Asn-40 contribute to the active site.

The protein belongs to the acylphosphatase family.

The enzyme catalyses an acyl phosphate + H2O = a carboxylate + phosphate + H(+). The polypeptide is Acylphosphatase (acyP) (Mycolicibacterium vanbaalenii (strain DSM 7251 / JCM 13017 / BCRC 16820 / KCTC 9966 / NRRL B-24157 / PYR-1) (Mycobacterium vanbaalenii)).